Reading from the N-terminus, the 5098-residue chain is Auxin transport protein BIG (5098 aa).

A2 carries the post-translational modification N-acetylalanine. 2 helical membrane passes run 1150–1170 (AILL…NGLL) and 1458–1478 (LAAE…IGTL). Over residues 1539 to 1549 (SVDEDEDDGTS) the composition is skewed to acidic residues. The segment at 1539-1562 (SVDEDEDDGTSDGEVASLDKEDEE) is disordered. The UBR-type zinc-finger motif lies at 1573–1644 (KVCTFTSSGS…RGSSCQCLKP (72 aa)). The ZZ-type zinc-finger motif lies at 2613–2672 (SVQYCCDGCSTVPILRRRWHCTVCPDFDLCEACYEVLDADRLPPPHTRDHPMTAIPIEVE). Residues C2618, C2621, C2633, C2636, C2642, C2645, H2658, and H2662 each coordinate Zn(2+). A helical membrane pass occupies residues 2813-2833 (SSLGEIVILVFMFFTLMLRSW). The interval 3149–3174 (EVVTGSNRSGSQSVDSKKKKKGEDGH) is disordered. A compositionally biased stretch (polar residues) spans 3151–3162 (VTGSNRSGSQSV). The segment at 3464-3504 (CPRCSRPVTDKHGICSNCHENAYQCRQCRNINYENLDSFLC) adopts an MYND-type; degenerate zinc-finger fold. Coiled coils occupy residues 3537–3557 (KKGL…YQQL) and 4313–4333 (LEIL…NQEE). Residues 4569–5098 (PSVPLILSML…QFVRSAIDKD (530 aa)) are UBR4 E3 catalytic module. The segment at 4698–4817 (GLACMVCREG…WDNLNALGRA (120 aa)) adopts a HemiRING-type zinc-finger fold. 4 residues coordinate Zn(2+): C4701, C4704, H4751, and C4754. The UZI domain occupies 4820–5098 (SRLRLLTYDI…QFVRSAIDKD (279 aa)). Low complexity predominate over residues 4891-4903 (SSTSTATAPSSDS). A disordered region spans residues 4891–4915 (SSTSTATAPSSDSRPLTPGSQLSST).

This sequence belongs to the UBR4 family. As to expression, constitutively expressed in roots, rosette leaves, inflorescence stems, and flowers. Present in inflorescence meristems, floral meristems and vascular tissues.

It localises to the membrane. In terms of biological role, required for auxin efflux and polar auxin transport (PAT) influencing auxin-mediated developmental responses (e.g. cell elongation, apical dominance, lateral root production, inflorescence architecture, general growth and development). Controls the elongation of the pedicels and stem internodes through auxin action. Involved in the expression modulation of light-regulated genes. Represses CAB1 and CAB3 genes expression in etiolated seedlings. Confers sensitivity to the auxin transport inhibitors N-1-naphthylphthalamic acid (NPA), 2-carboxyphenyl-3-phenylpropane-l,2-dione (CPD), and methyl-2-chloro-9-hydroxyfluorene-9-carboxylate (CFM). Influences the polarized subcellular distribution of the auxin transporter PIN1 in response to auxin transport inhibitors. Plays a role in the regulation of responses to phytohormones such as auxin, cytokinins, ethylene and gibberellic acid (GA), particularly during light-mediated stimuli (e.g. shade ovoidance, etiolation). Required for pericycle cell activation to form lateral root primordia (LRP) in both high and low phosphate P conditions. Necessary for the plant-growth promotion and lateral root development mediated by the fungus Trichoderma virens. This Arabidopsis thaliana (Mouse-ear cress) protein is Auxin transport protein BIG (BIG).